Reading from the N-terminus, the 370-residue chain is Aminomethyltransferase (370 aa).

This sequence belongs to the GcvT family. In terms of assembly, the glycine cleavage system is composed of four proteins: P, T, L and H.

The enzyme catalyses N(6)-[(R)-S(8)-aminomethyldihydrolipoyl]-L-lysyl-[protein] + (6S)-5,6,7,8-tetrahydrofolate = N(6)-[(R)-dihydrolipoyl]-L-lysyl-[protein] + (6R)-5,10-methylene-5,6,7,8-tetrahydrofolate + NH4(+). The glycine cleavage system catalyzes the degradation of glycine. This chain is Aminomethyltransferase, found in Clostridium botulinum (strain Okra / Type B1).